The sequence spans 201 residues: NADH-quinone oxidoreductase subunit C (201 aa).

It belongs to the complex I 30 kDa subunit family. NDH-1 is composed of 14 different subunits. Subunits NuoB, C, D, E, F, and G constitute the peripheral sector of the complex.

Its subcellular location is the cell inner membrane. It carries out the reaction a quinone + NADH + 5 H(+)(in) = a quinol + NAD(+) + 4 H(+)(out). NDH-1 shuttles electrons from NADH, via FMN and iron-sulfur (Fe-S) centers, to quinones in the respiratory chain. The immediate electron acceptor for the enzyme in this species is believed to be ubiquinone. Couples the redox reaction to proton translocation (for every two electrons transferred, four hydrogen ions are translocated across the cytoplasmic membrane), and thus conserves the redox energy in a proton gradient. This chain is NADH-quinone oxidoreductase subunit C, found in Aromatoleum aromaticum (strain DSM 19018 / LMG 30748 / EbN1) (Azoarcus sp. (strain EbN1)).